We begin with the raw amino-acid sequence, 144 residues long: 3-hydroxyacyl-[acyl-carrier-protein] dehydratase FabZ (144 aa).

The active site involves H47.

It belongs to the thioester dehydratase family. FabZ subfamily.

It is found in the cytoplasm. The catalysed reaction is a (3R)-hydroxyacyl-[ACP] = a (2E)-enoyl-[ACP] + H2O. Its function is as follows. Involved in unsaturated fatty acids biosynthesis. Catalyzes the dehydration of short chain beta-hydroxyacyl-ACPs and long chain saturated and unsaturated beta-hydroxyacyl-ACPs. The protein is 3-hydroxyacyl-[acyl-carrier-protein] dehydratase FabZ of Dechloromonas aromatica (strain RCB).